Consider the following 279-residue polypeptide: Elongation factor Ts (279 aa).

The segment at 80–83 is involved in Mg(2+) ion dislocation from EF-Tu; that stretch reads TDFV.

It belongs to the EF-Ts family.

The protein localises to the cytoplasm. Associates with the EF-Tu.GDP complex and induces the exchange of GDP to GTP. It remains bound to the aminoacyl-tRNA.EF-Tu.GTP complex up to the GTP hydrolysis stage on the ribosome. The polypeptide is Elongation factor Ts (tsf) (Borreliella burgdorferi (strain ATCC 35210 / DSM 4680 / CIP 102532 / B31) (Borrelia burgdorferi)).